Here is a 226-residue protein sequence, read N- to C-terminus: Ribonuclease 3 (226 aa).

The region spanning 5-127 (LERLQRALGY…IIGAIYLDAG (123 aa)) is the RNase III domain. Glu40 provides a ligand contact to Mg(2+). Residue Asp44 is part of the active site. Residues Asp113 and Glu116 each contribute to the Mg(2+) site. Residue Glu116 is part of the active site. The DRBM domain maps to 154 to 224 (DSKTRLQEYL…AKQALLALGV (71 aa)).

The protein belongs to the ribonuclease III family. In terms of assembly, homodimer. Requires Mg(2+) as cofactor.

The protein resides in the cytoplasm. It catalyses the reaction Endonucleolytic cleavage to 5'-phosphomonoester.. Digests double-stranded RNA. Involved in the processing of primary rRNA transcript to yield the immediate precursors to the large and small rRNAs (23S and 16S). Processes some mRNAs, and tRNAs when they are encoded in the rRNA operon. Processes pre-crRNA and tracrRNA of type II CRISPR loci if present in the organism. The sequence is that of Ribonuclease 3 from Hahella chejuensis (strain KCTC 2396).